The following is a 454-amino-acid chain: GTPase Der (454 aa).

2 EngA-type G domains span residues 3-167 and 181-354; these read PVIT…GIAE and MKIA…AAAM. GTP-binding positions include 9 to 16, 56 to 60, 119 to 122, 187 to 194, 234 to 238, and 299 to 302; these read GRPNVGKS, DTGGF, NKTE, DTAGL, and NKWD. The 85-residue stretch at 355-439 folds into the KH-like domain; that stretch reads AKLPTPRLTR…PLRIQMNTAK (85 aa).

This sequence belongs to the TRAFAC class TrmE-Era-EngA-EngB-Septin-like GTPase superfamily. EngA (Der) GTPase family. As to quaternary structure, associates with the 50S ribosomal subunit.

In terms of biological role, GTPase that plays an essential role in the late steps of ribosome biogenesis. The chain is GTPase Der from Polynucleobacter asymbioticus (strain DSM 18221 / CIP 109841 / QLW-P1DMWA-1) (Polynucleobacter necessarius subsp. asymbioticus).